The following is a 434-amino-acid chain: UDP-N-acetylglucosamine 1-carboxyvinyltransferase (434 aa).

22 to 23 (KN) is a binding site for phosphoenolpyruvate. A UDP-N-acetyl-alpha-D-glucosamine-binding site is contributed by Arg-99. The active-site Proton donor is the Cys-123. Residue Cys-123 is modified to 2-(S-cysteinyl)pyruvic acid O-phosphothioketal. Residues 128-132 (RPVDQ), Asp-317, and Ile-339 each bind UDP-N-acetyl-alpha-D-glucosamine.

This sequence belongs to the EPSP synthase family. MurA subfamily.

It is found in the cytoplasm. The enzyme catalyses phosphoenolpyruvate + UDP-N-acetyl-alpha-D-glucosamine = UDP-N-acetyl-3-O-(1-carboxyvinyl)-alpha-D-glucosamine + phosphate. Its pathway is cell wall biogenesis; peptidoglycan biosynthesis. Functionally, cell wall formation. Adds enolpyruvyl to UDP-N-acetylglucosamine. This Paracidovorax citrulli (strain AAC00-1) (Acidovorax citrulli) protein is UDP-N-acetylglucosamine 1-carboxyvinyltransferase.